A 271-amino-acid chain; its full sequence is Mannosyl-3-phosphoglycerate phosphatase (271 aa).

Asp13 functions as the Nucleophile in the catalytic mechanism. Residues Asp13, Asp15, and Asp214 each contribute to the Mg(2+) site.

Belongs to the HAD-like hydrolase superfamily. MPGP family. Mg(2+) serves as cofactor.

The protein resides in the cytoplasm. It catalyses the reaction 2-O-(alpha-D-mannosyl)-3-phosphoglycerate + H2O = (2R)-2-O-(alpha-D-mannosyl)-glycerate + phosphate. This Shigella dysenteriae serotype 1 (strain Sd197) protein is Mannosyl-3-phosphoglycerate phosphatase (yedP).